Here is a 226-residue protein sequence, read N- to C-terminus: Pathogenesis-related protein R major form (226 aa).

Residues 1-25 form the signal peptide; sequence MNFLKSFPFFAFLYFGQYFVAVTHA. Intrachain disulfides connect Cys-34–Cys-225, Cys-75–Cys-85, Cys-90–Cys-96, Cys-140–Cys-214, Cys-145–Cys-197, Cys-153–Cys-163, Cys-167–Cys-176, and Cys-177–Cys-184.

This sequence belongs to the thaumatin family.

It localises to the vacuole. This is Pathogenesis-related protein R major form from Nicotiana tabacum (Common tobacco).